The following is a 193-amino-acid chain: Acyl carrier protein phosphodiesterase (193 aa).

Belongs to the AcpH family.

It catalyses the reaction holo-[ACP] + H2O = apo-[ACP] + (R)-4'-phosphopantetheine + H(+). In terms of biological role, converts holo-ACP to apo-ACP by hydrolytic cleavage of the phosphopantetheine prosthetic group from ACP. The protein is Acyl carrier protein phosphodiesterase of Yersinia enterocolitica serotype O:8 / biotype 1B (strain NCTC 13174 / 8081).